Reading from the N-terminus, the 242-residue chain is Ribonuclease 3 (242 aa).

An RNase III domain is found at 7–136 (LEALQNLLGY…LLASIYLDGG (130 aa)). Glu49 is a binding site for Mg(2+). The active site involves Asp53. Positions 122 and 125 each coordinate Mg(2+). Glu125 is a catalytic residue. One can recognise a DRBM domain in the interval 167–236 (DYKTQLQELT…AEKALQIIAA (70 aa)).

It belongs to the ribonuclease III family. As to quaternary structure, homodimer. Mg(2+) serves as cofactor.

The protein resides in the cytoplasm. The catalysed reaction is Endonucleolytic cleavage to 5'-phosphomonoester.. Its function is as follows. Digests double-stranded RNA. Involved in the processing of primary rRNA transcript to yield the immediate precursors to the large and small rRNAs (23S and 16S). Processes some mRNAs, and tRNAs when they are encoded in the rRNA operon. Processes pre-crRNA and tracrRNA of type II CRISPR loci if present in the organism. In Syntrophobacter fumaroxidans (strain DSM 10017 / MPOB), this protein is Ribonuclease 3.